We begin with the raw amino-acid sequence, 216 residues long: Small ribosomal subunit protein uS3 (216 aa).

The region spanning 39–111 (IYKFFDKLVR…DINLQVSLLK (73 aa)) is the KH type-2 domain.

This sequence belongs to the universal ribosomal protein uS3 family. Part of the 30S ribosomal subunit. Forms a tight complex with proteins S10 and S14.

In terms of biological role, binds the lower part of the 30S subunit head. Binds mRNA in the 70S ribosome, positioning it for translation. The polypeptide is Small ribosomal subunit protein uS3 (Mycoplasmopsis agalactiae (strain NCTC 10123 / CIP 59.7 / PG2) (Mycoplasma agalactiae)).